Here is a 524-residue protein sequence, read N- to C-terminus: MLKDIHQHRILILDFSSQYAQLIARRVREIGVYCELMPCDIDEETIRDFNPHGIILSGGPETVTLSHTLRAPAFIFEIGCPVLGICYGMQTMAYQLGGKVNRTAKAEFGHAQLRVLNPAFLFDGIEDQVSPQGEPLLDVWMSHGDIVSELPPGFEATACTDNSPLAAMADFKRRFFGLQFHPEVTHTPQGHRILAHFVIHICQCIPNWTTKHIIEDSIRDIQEKVGKEQVIVGLSGGVDSAVTATLVHKAIGDQLVCVLVDTGLLRLNEVDEVLNVFQKHLGAKVICVDAKDRFMKALKGISDPEEKRKIAGEQFIRVFEEQAKKLNVKWLGQGTIYPDVIESAKTKTGKGHIIKTHHNVGGLPLNMELKLIEPLRELFKDEVRKLGLELGLPADLIYRHPFPGPGLAIRILGEVNAEYINILKQADAIFIEELKKSDYYHQVSQAFAVFMPLKSVGVKGDARHYGYIIALRAVKTVDFMTAQWADLPHEFLSKVSHRIVNEIKEVSRVVYDMTNKPPATIEWE.

One can recognise a Glutamine amidotransferase type-1 domain in the interval 9 to 207; that stretch reads RILILDFSSQ…VIHICQCIPN (199 aa). C86 functions as the Nucleophile in the catalytic mechanism. Catalysis depends on residues H181 and E183. Positions 208 to 399 constitute a GMPS ATP-PPase domain; sequence WTTKHIIEDS…LGLPADLIYR (192 aa). Residue 235-241 coordinates ATP; sequence SGGVDSA.

Homodimer.

It catalyses the reaction XMP + L-glutamine + ATP + H2O = GMP + L-glutamate + AMP + diphosphate + 2 H(+). It participates in purine metabolism; GMP biosynthesis; GMP from XMP (L-Gln route): step 1/1. In terms of biological role, catalyzes the synthesis of GMP from XMP. This Coxiella burnetii (strain Dugway 5J108-111) protein is GMP synthase [glutamine-hydrolyzing].